Consider the following 697-residue polypeptide: Semaphorin-2A (697 aa).

The N-terminal stretch at 1-20 (MAAKLWNLLLVAASVHLVGS) is a signal peptide. One can recognise a Sema domain in the interval 21-493 (VEQLHQDLIH…SDNIVRQIEL (473 aa)). N-linked (GlcNAc...) asparagine glycans are attached at residues N63 and N66. A disulfide bridge connects residues C87 and C98. 3 N-linked (GlcNAc...) asparagine glycosylation sites follow: N132, N198, and N283. Cystine bridges form between C260–C367 and C284–C326. N-linked (GlcNAc...) asparagine glycosylation occurs at N369. Cystine bridges form between C496–C512 and C506–C521. The 109-residue stretch at 526-634 (PGLLQDVTNT…LCSYNITVDA (109 aa)) folds into the Ig-like C2-type domain. Residues N534, N629, and N679 are each glycosylated (N-linked (GlcNAc...) asparagine). Cysteines 618 and 654 form a disulfide. A compositionally biased stretch (polar residues) spans 673-685 (QCSTKQNNSNQKT). Positions 673 to 697 (QCSTKQNNSNQKTHPNDIFHSNPVA) are disordered.

Belongs to the semaphorin family. In terms of tissue distribution, expressed in a gradient in the developing limb bud epithelium during Ti pioneer axon outgrowth.

It is found in the secreted. Acts as a chemorepulsive guidance molecule critical for axon fasciculation and for determining both the initial direction and subsequent pathfinding events of the Ti axon projection. The chain is Semaphorin-2A (SEMA-2A) from Schistocerca gregaria (Desert locust).